Here is a 334-residue protein sequence, read N- to C-terminus: Glutaminase (334 aa).

7 residues coordinate substrate: Ser76, Asn126, Glu170, Asn177, Tyr201, Tyr253, and Val271.

This sequence belongs to the glutaminase family. In terms of assembly, homotetramer.

The catalysed reaction is L-glutamine + H2O = L-glutamate + NH4(+). This Trichormus variabilis (strain ATCC 29413 / PCC 7937) (Anabaena variabilis) protein is Glutaminase.